The primary structure comprises 240 residues: UDP-2,3-diacylglucosamine hydrolase (240 aa).

5 residues coordinate Mn(2+): D8, H10, D41, N79, and H114. 79–80 is a binding site for substrate; it reads NR. D122, S160, N164, K167, and H195 together coordinate substrate. The Mn(2+) site is built by H195 and H197.

This sequence belongs to the LpxH family. Mn(2+) serves as cofactor.

Its subcellular location is the cell inner membrane. The catalysed reaction is UDP-2-N,3-O-bis[(3R)-3-hydroxytetradecanoyl]-alpha-D-glucosamine + H2O = 2-N,3-O-bis[(3R)-3-hydroxytetradecanoyl]-alpha-D-glucosaminyl 1-phosphate + UMP + 2 H(+). Its pathway is glycolipid biosynthesis; lipid IV(A) biosynthesis; lipid IV(A) from (3R)-3-hydroxytetradecanoyl-[acyl-carrier-protein] and UDP-N-acetyl-alpha-D-glucosamine: step 4/6. Its function is as follows. Hydrolyzes the pyrophosphate bond of UDP-2,3-diacylglucosamine to yield 2,3-diacylglucosamine 1-phosphate (lipid X) and UMP by catalyzing the attack of water at the alpha-P atom. Involved in the biosynthesis of lipid A, a phosphorylated glycolipid that anchors the lipopolysaccharide to the outer membrane of the cell. The chain is UDP-2,3-diacylglucosamine hydrolase from Salmonella typhi.